The sequence spans 287 residues: Bifunctional protein FolD (287 aa).

NADP(+)-binding positions include 165-167 (GRS), Ser190, and Ile231.

Belongs to the tetrahydrofolate dehydrogenase/cyclohydrolase family. As to quaternary structure, homodimer.

It carries out the reaction (6R)-5,10-methylene-5,6,7,8-tetrahydrofolate + NADP(+) = (6R)-5,10-methenyltetrahydrofolate + NADPH. The catalysed reaction is (6R)-5,10-methenyltetrahydrofolate + H2O = (6R)-10-formyltetrahydrofolate + H(+). It participates in one-carbon metabolism; tetrahydrofolate interconversion. In terms of biological role, catalyzes the oxidation of 5,10-methylenetetrahydrofolate to 5,10-methenyltetrahydrofolate and then the hydrolysis of 5,10-methenyltetrahydrofolate to 10-formyltetrahydrofolate. The sequence is that of Bifunctional protein FolD from Carboxydothermus hydrogenoformans (strain ATCC BAA-161 / DSM 6008 / Z-2901).